Consider the following 145-residue polypeptide: D-aminoacyl-tRNA deacylase (145 aa).

The Gly-cisPro motif, important for rejection of L-amino acids motif lies at 137 to 138 (GP).

Belongs to the DTD family. Homodimer.

It localises to the cytoplasm. It catalyses the reaction glycyl-tRNA(Ala) + H2O = tRNA(Ala) + glycine + H(+). It carries out the reaction a D-aminoacyl-tRNA + H2O = a tRNA + a D-alpha-amino acid + H(+). Functionally, an aminoacyl-tRNA editing enzyme that deacylates mischarged D-aminoacyl-tRNAs. Also deacylates mischarged glycyl-tRNA(Ala), protecting cells against glycine mischarging by AlaRS. Acts via tRNA-based rather than protein-based catalysis; rejects L-amino acids rather than detecting D-amino acids in the active site. By recycling D-aminoacyl-tRNA to D-amino acids and free tRNA molecules, this enzyme counteracts the toxicity associated with the formation of D-aminoacyl-tRNA entities in vivo and helps enforce protein L-homochirality. This chain is D-aminoacyl-tRNA deacylase, found in Shewanella sp. (strain MR-4).